Here is a 169-residue protein sequence, read N- to C-terminus: Transcription antitermination protein NusB (169 aa).

The disordered stretch occupies residues 1–20 (MAESSNKPFRGPVRANDRKA).

This sequence belongs to the NusB family.

Involved in transcription antitermination. Required for transcription of ribosomal RNA (rRNA) genes. Binds specifically to the boxA antiterminator sequence of the ribosomal RNA (rrn) operons. In Bradyrhizobium sp. (strain BTAi1 / ATCC BAA-1182), this protein is Transcription antitermination protein NusB.